The sequence spans 242 residues: DNA repair protein RecO (242 aa).

The protein belongs to the RecO family.

Involved in DNA repair and RecF pathway recombination. The protein is DNA repair protein RecO of Bacteroides fragilis (strain ATCC 25285 / DSM 2151 / CCUG 4856 / JCM 11019 / LMG 10263 / NCTC 9343 / Onslow / VPI 2553 / EN-2).